We begin with the raw amino-acid sequence, 414 residues long: uncharacterized protein (414 aa).

The interval 204 to 230 is disordered; the sequence is LVGTPAPGPNGSNSDGDSERASQDVRD. Residues 220-230 show a composition bias toward basic and acidic residues; sequence DSERASQDVRD.

This sequence belongs to the CdaR family.

This is an uncharacterized protein from Mycobacterium tuberculosis (strain CDC 1551 / Oshkosh).